The sequence spans 533 residues: MVIITSWKRFKEYLYYDQELELLLDISRMNFSAEFLTELAEPMRDAYHQLQLLEKGALANPDEGRMVGHYWLRNPDLAPTEEIAQDIKETLKEILDFAEQIHSGRLQGEKGNPFRNILLVGVGGSILGPRFVADALASSRDKMKAFFIDNGDPDGIDRVLSRIGEELPATLCLIISKSGGTIETRNGMLEVRRAYEEAGLSFPDHAVAITQRGSQLDKLSQKEGWLRAFPMWDWVGGRTSLLSAVGLLSLALQGIDVAGLLQGAKDCDGRTRRPDTLANPGALLALMWYYSTQGQGGKQMVVLPYKDRLELFTKYLQQLIMESLGKEKNLQGETVHQGITVYGNKGSSDQHSYLQQLLEGPDNFFVTFIEVLKDRQGSSAYMEENSTSGEYLQAFLLGTREALTQKGRESLTITVKEVNAYTIGVLIALFERAVSIYALLVGINAYHQPAVEMGKKAAGQAIQLKNNIVECLKKHPDKRFSVHEIALAIGEEAHQEMVFKLLLHLTTNPEHGVNMAAGHPLPESRFFVSGPIL.

The Proton donor role is filled by glutamate 322. Active-site residues include histidine 351 and lysine 455.

The protein belongs to the GPI family.

Its subcellular location is the cytoplasm. The enzyme catalyses alpha-D-glucose 6-phosphate = beta-D-fructose 6-phosphate. The protein operates within carbohydrate biosynthesis; gluconeogenesis. It functions in the pathway carbohydrate degradation; glycolysis; D-glyceraldehyde 3-phosphate and glycerone phosphate from D-glucose: step 2/4. Its function is as follows. Catalyzes the reversible isomerization of glucose-6-phosphate to fructose-6-phosphate. This Desulfitobacterium hafniense (strain DSM 10664 / DCB-2) protein is Glucose-6-phosphate isomerase.